The sequence spans 185 residues: Translation initiation factor IF-3 (185 aa).

The protein belongs to the IF-3 family. Monomer.

The protein localises to the cytoplasm. Its function is as follows. IF-3 binds to the 30S ribosomal subunit and shifts the equilibrium between 70S ribosomes and their 50S and 30S subunits in favor of the free subunits, thus enhancing the availability of 30S subunits on which protein synthesis initiation begins. The protein is Translation initiation factor IF-3 of Bacteroides thetaiotaomicron (strain ATCC 29148 / DSM 2079 / JCM 5827 / CCUG 10774 / NCTC 10582 / VPI-5482 / E50).